Consider the following 1241-residue polypeptide: ATP-dependent helicase/nuclease subunit A (1241 aa).

Residues 12–485 (SQWTDDQWKA…IDLAKNFRSR (474 aa)) enclose the UvrD-like helicase ATP-binding domain. 33-40 (AAAGSGKT) serves as a coordination point for ATP. The region spanning 505–805 (GEIDYDADAE…RIMTIHKSKG (301 aa)) is the UvrD-like helicase C-terminal domain.

This sequence belongs to the helicase family. AddA subfamily. Heterodimer of AddA and AddB/RexB. Requires Mg(2+) as cofactor.

It catalyses the reaction Couples ATP hydrolysis with the unwinding of duplex DNA by translocating in the 3'-5' direction.. It carries out the reaction ATP + H2O = ADP + phosphate + H(+). Functionally, the heterodimer acts as both an ATP-dependent DNA helicase and an ATP-dependent, dual-direction single-stranded exonuclease. Recognizes the chi site generating a DNA molecule suitable for the initiation of homologous recombination. The AddA nuclease domain is required for chi fragment generation; this subunit has the helicase and 3' -&gt; 5' nuclease activities. The polypeptide is ATP-dependent helicase/nuclease subunit A (Bacillus cereus (strain B4264)).